Consider the following 472-residue polypeptide: 3-isopropylmalate dehydratase large subunit (472 aa).

Positions 352, 412, and 415 each coordinate [4Fe-4S] cluster.

Belongs to the aconitase/IPM isomerase family. LeuC type 1 subfamily. As to quaternary structure, heterodimer of LeuC and LeuD. [4Fe-4S] cluster is required as a cofactor.

It carries out the reaction (2R,3S)-3-isopropylmalate = (2S)-2-isopropylmalate. Its pathway is amino-acid biosynthesis; L-leucine biosynthesis; L-leucine from 3-methyl-2-oxobutanoate: step 2/4. Catalyzes the isomerization between 2-isopropylmalate and 3-isopropylmalate, via the formation of 2-isopropylmaleate. This is 3-isopropylmalate dehydratase large subunit from Roseiflexus castenholzii (strain DSM 13941 / HLO8).